A 317-amino-acid polypeptide reads, in one-letter code: Large ribosomal subunit protein uL10 (317 aa).

Position 24 is a phosphotyrosine (Tyr24). The residue at position 59 (Thr59) is a Phosphothreonine. Lys264 participates in a covalent cross-link: Glycyl lysine isopeptide (Lys-Gly) (interchain with G-Cter in ubiquitin). Residues 294–317 (APAKVEAKEESEESDEDMGFGLFD) are disordered. Lys297 is covalently cross-linked (Glycyl lysine isopeptide (Lys-Gly) (interchain with G-Cter in SUMO1); alternate). Lys297 is covalently cross-linked (Glycyl lysine isopeptide (Lys-Gly) (interchain with G-Cter in SUMO2); alternate). Residues 302 to 311 (EESEESDEDM) are compositionally biased toward acidic residues. Phosphoserine occurs at positions 304 and 307.

Belongs to the universal ribosomal protein uL10 family. P0 forms a pentameric complex by interaction with dimers of P1 and P2. Identified in a IGF2BP1-dependent mRNP granule complex containing untranslated mRNAs. Interacts with APEX1. Interacts with FMR1 isoform 6. Ubiquitinated at Lys-264 by RNF14 and RNF25 in response to ribosome collisions (ribosome stalling).

The protein resides in the nucleus. It is found in the cytoplasm. Functionally, ribosomal protein P0 is the functional equivalent of E.coli protein L10. This is Large ribosomal subunit protein uL10 (RPLP0) from Homo sapiens (Human).